The primary structure comprises 2105 residues: MAFTYRNPLEIAINKLPSKQTDQLLSLTTDEIEKTLEVTNRFFSFSITPEDQELLTKHGLTLAPIGFKAHSHPVSKMIENHLLYICVPSLLSSFKSVAFFSLRESKANSFLKMHSAFSHGKIKSMGMYNAIIDGKDKYRYGDVSFTSFRERVIGLRDQCLTRNKFPKIIFMHDELHFLSPFDIAYLFETIPEIDRVIATTVFPIELLFGDKVSKEPRVYTYKVHGSSFSFYPDGVASECYEQNLANSKWPFTCNGIQWANRRVRVTKLQSLFAHHVFSFDRGRACNDFNHFNKPGCLLSEEMRLLTKRFDKAVINRSTVSSLSTYMACLKTANAASAVAKLRQLEKRDLYPDELNFVYSFGEHFKNFGMRDDFDVSVLQWVKDKFCQVMPHFISASFFEPTEFHLNMRKLLNDLATKGIEVPLPTIVLDKVNFIETRFHARMFEVASAIGVNLDLLGKRFDFENESEEYFSENGYLFMPSKHNTDRNWILNSCPVRVDYSKLVRARRFRLKRDFVEEILKKRPPRTQLFLEFNKDFGGPVSFEKEEVEKKGEAATRVEDKAPHEPSCSNLSTEDGQGFEGSLPLDLISCFEQEEIRLPKRKRKNDCVFKAIAAHLGIETQDLLNFLVNEDISDELLDCIEEDKGLSHEMIEEVLVTKGLSMVYTSDFKEMAVLNRKYGVNGKMYCTIKGNHCELSSKECFIRLLKEGGNAQMSNENLNADSMFDLGKFVHNKERAVKLAKSMARGTTGLLNSFDPNFCKEVVGLSELFPDNFSSVVGLRLGFAGSGKTHKVLQWINYTPNVKRMFISPRRMLAEEVEGRLKGTACQVHTWETALRKIDGTFMEVFVDEIGLYPPGYLTLLQMCAFRRTVKGQSERFLKSKLAELSKTCLSLRCFGDPLQMRYYSAEDTNLLDKTHELDLMIKTIKHKYLLQGYRFGEWFQSLINMPTRIDSSEISIKFFADMSSVKSEDYGLVLVARREDIGVFAGRIPVATVSESQGMTIDKRVLICLDQNLFAGGANAAIVAITRSRVGFDFVLKGNTLKEIQRMSQKTIWQFILEKKRIPMERIVNMNPGASFYESPLDVGNSSIQDKASHDVFIMPFINLAEEEVDPEEICGDVIKPVEWFKCHVPVFDTDPMLAEIFDKVAAKEKREFQSILGMSNQFLDMEKNGCKIDILPFARQNVFPHHQASDDVTFWAGVQKRIRKSNWRREKTKFEEFEIQGRELLSEFLSMLPCEFKVNIKDIEEGEKSFLEKRKLKSEKMWANHSERSDIDWKLDHVFLFMKSQYCTKEGKMFTEAKAGQTLACFQHIVLFRFGPMLRAIESAFLRSCGDSYYIHSGKNFFCLDSFVTKNAEVFDGFSIESDYTAFDSSQDHVILAFEMALLQYLGVSKEFQLDYLRLKLTLGCRLGSLAIMRFTGEFCTFLFNTFANMLFTQLKYKIDPRKHRILFAGDDMCSLSSLKRRRGERATRLMKSFSLTAVEEVRKFPMFCGWYLSPYGIIKSPKLLWARIKMMSERQLLKECVDNYLFEAIFAYRLGERLYTILKEEDFEYHYLVIRFFVKNSKLLTGLSKSLIFEIGEGIGSEWQLSMSTTSSKRLNQQISRLMPSRHLNFIKMQPFSSQMFSIASNDLNQMSKCLKVRVMDSCCPTSSCLMTQKLTPLERRATSTNTYIMELFLLASKQCCPTSGEWKGGSLYMTVPVWTQKEVIYVPTYSDLSLTAVTLDSDQNIAYLQLMLIWQKGSGSEWILTVHNTNRTQSCLLLTLELHTGVSTQLDSWKPKQVIQDGLHRQSAAVKHLNTMKRSRWRSWITNHRCFWRKVHRMCILKKECSEGTRSGGRALSLPKGGQTQGQKKREDLGPSQRGLKDLGKMSLEDVLQLARRHRVGVYLWKTQIDPGKEILTVPPPESFKEGESFEGRELYLLLCNHYCKYLFGNIAVFGSSDKTQFPAVGFDTPPVHYNLTTTPKEGETEEQKKAREGSSGEKSKIWRIDLSNVVPELKTFAATSRQNSLNECTFRKLCEPFADLAREFLHERWSKGLATNIYKKWPKAFEKSPWVAFDFATGLKMNKLTPDEKQVIDRMTKRLFRTEGQKGVFEAGSESNLELEG.

The region spanning 63–250 (APIGFKAHSH…EQNLANSKWP (188 aa)) is the Alphavirus-like MT domain. Over residues 552–563 (EAATRVEDKAPH) the composition is skewed to basic and acidic residues. Positions 552–575 (EAATRVEDKAPHEPSCSNLSTEDG) are disordered. Residues 753–929 (FDPNFCKEVV…MIKTIKHKYL (177 aa)) form the (+)RNA virus helicase ATP-binding domain. An ATP-binding site is contributed by 781–788 (GFAGSGKT). The region spanning 930–1067 (LQGYRFGEWF…EKKRIPMERI (138 aa)) is the (+)RNA virus helicase C-terminal domain. One can recognise a RdRp catalytic domain in the interval 1358-1466 (GFSIESDYTA…LSSLKRRRGE (109 aa)). Residues 1585–1868 (WQLSMSTTSS…SQRGLKDLGK (284 aa)) are V-region. Disordered stretches follow at residues 1832–1862 (TRSGGRALSLPKGGQTQGQKKREDLGPSQRG) and 1960–1980 (TTTPKEGETEEQKKAREGSSG). Basic and acidic residues-rich tracts occupy residues 1851–1862 (KKREDLGPSQRG) and 1964–1980 (KEGETEEQKKAREGSSG).

In terms of processing, the N-terminus of the coat protein is blocked.

It localises to the virion. It carries out the reaction RNA(n) + a ribonucleoside 5'-triphosphate = RNA(n+1) + diphosphate. The catalysed reaction is ATP + H2O = ADP + phosphate + H(+). In terms of biological role, replicates genomic RNA, and might as well transcribe a subgenomic RNA coding for coat protein. Its function is as follows. Coat protein: encapsidates the viral genome. Forms particles of very flexuous filaments, 619 nm long and 12 nm in width, with obvious cross-banding, helical symmetry and a pitch of c. 3.8 nm. Synthesis remains unclear: either by cleavage of the ORF1 polyprotein, or by translation of a subgenomic RNA. In Malus sylvestris (European crab apple), this protein is Genome polyprotein.